The sequence spans 161 residues: UPF0303 protein Spro_1996 (161 aa).

The protein belongs to the UPF0303 family.

The polypeptide is UPF0303 protein Spro_1996 (Serratia proteamaculans (strain 568)).